Reading from the N-terminus, the 275-residue chain is Coagulation factor IX (275 aa).

The residue at position 23 (tyrosine 23) is a Sulfotyrosine. A glycan (N-linked (GlcNAc...) asparagine) is linked at asparagine 25. At threonine 27 the chain carries Phosphothreonine. N-linked (GlcNAc...) asparagine glycosylation occurs at asparagine 35. An O-linked (GalNAc...) threonine glycan is attached at threonine 47. The Peptidase S1 domain occupies 49 to 275; the sequence is IVGGENAKPG…YTRVSWYVNW (227 aa). Cysteine 74 and cysteine 90 form a disulfide bridge. The active-site Charge relay system is histidine 89. The N-linked (GlcNAc...) asparagine glycan is linked to asparagine 96. Glutamate 103, asparagine 105, glutamate 108, glutamate 110, and glutamate 113 together coordinate Ca(2+). Asparagine 128 carries an N-linked (GlcNAc...) asparagine glycan. The active-site Charge relay system is aspartate 137. 2 disulfides stabilise this stretch: cysteine 204-cysteine 218 and cysteine 229-cysteine 257. The active-site Charge relay system is the serine 233.

It belongs to the peptidase S1 family. As to quaternary structure, heterodimer of a light chain and a heavy chain; disulfide-linked. Interacts (inactive and activated) with F11 (activated) in calcium-dependent manner. Interacts with SERPINC1. Post-translationally, activated by factor XIa, which excises the activation peptide. The propeptide can also be removed by snake venom protease. Activated by coagulation factor VIIa-tissue factor (F7-F3) complex in calcium-dependent manner.

The protein localises to the secreted. It catalyses the reaction Selective cleavage of Arg-|-Ile bond in factor X to form factor Xa.. Its function is as follows. Factor IX is a vitamin K-dependent plasma protein that participates in the intrinsic pathway of blood coagulation by converting factor X to its active form in the presence of Ca(2+) ions, phospholipids, and factor VIIIa. The sequence is that of Coagulation factor IX (F9) from Oryctolagus cuniculus (Rabbit).